The chain runs to 232 residues: 2,3,4,5-tetrahydropyridine-2,6-dicarboxylate N-acetyltransferase (232 aa).

Belongs to the transferase hexapeptide repeat family. DapH subfamily.

The enzyme catalyses (S)-2,3,4,5-tetrahydrodipicolinate + acetyl-CoA + H2O = L-2-acetamido-6-oxoheptanedioate + CoA. Its pathway is amino-acid biosynthesis; L-lysine biosynthesis via DAP pathway; LL-2,6-diaminopimelate from (S)-tetrahydrodipicolinate (acetylase route): step 1/3. Its function is as follows. Catalyzes the transfer of an acetyl group from acetyl-CoA to tetrahydrodipicolinate. The polypeptide is 2,3,4,5-tetrahydropyridine-2,6-dicarboxylate N-acetyltransferase (Streptococcus gordonii (strain Challis / ATCC 35105 / BCRC 15272 / CH1 / DL1 / V288)).